The following is a 438-amino-acid chain: Adenylosuccinate synthetase (438 aa).

Residues 13-19 (GDEGKGK) and 41-43 (GHT) contribute to the GTP site. Residue aspartate 14 is the Proton acceptor of the active site. Mg(2+)-binding residues include aspartate 14 and glycine 41. IMP contacts are provided by residues 14–17 (DEGK), 39–42 (NAGH), threonine 130, arginine 144, glutamine 225, threonine 240, and arginine 312. Histidine 42 acts as the Proton donor in catalysis. 308–314 (ATTGRQR) contributes to the substrate binding site. GTP contacts are provided by residues arginine 314, 340–342 (KLD), and 422–424 (STG).

The protein belongs to the adenylosuccinate synthetase family. As to quaternary structure, homodimer. The cofactor is Mg(2+).

The protein localises to the cytoplasm. The catalysed reaction is IMP + L-aspartate + GTP = N(6)-(1,2-dicarboxyethyl)-AMP + GDP + phosphate + 2 H(+). It functions in the pathway purine metabolism; AMP biosynthesis via de novo pathway; AMP from IMP: step 1/2. In terms of biological role, plays an important role in the de novo pathway of purine nucleotide biosynthesis. Catalyzes the first committed step in the biosynthesis of AMP from IMP. The polypeptide is Adenylosuccinate synthetase (Vesicomyosocius okutanii subsp. Calyptogena okutanii (strain HA)).